Reading from the N-terminus, the 289-residue chain is Cyclin-dependent kinase 2 homolog (289 aa).

The region spanning 4-285 is the Protein kinase domain; that stretch reads YHGLEKIGEG…AKQAIEHPYF (282 aa). ATP-binding positions include 10–18 and K32; that span reads IGEGTYGVV. Phosphothreonine is present on T14. At Y15 the chain carries Phosphotyrosine. D126 acts as the Proton acceptor in catalysis. At T159 the chain carries Phosphothreonine.

Belongs to the protein kinase superfamily. CMGC Ser/Thr protein kinase family. CDC2/CDKX subfamily. In terms of assembly, may form a complex composed of at least the catalytic subunit CRK2 and a cyclin. Mg(2+) serves as cofactor.

It is found in the cytoplasm. The catalysed reaction is L-seryl-[protein] + ATP = O-phospho-L-seryl-[protein] + ADP + H(+). The enzyme catalyses L-threonyl-[protein] + ATP = O-phospho-L-threonyl-[protein] + ADP + H(+). It catalyses the reaction [DNA-directed RNA polymerase] + ATP = phospho-[DNA-directed RNA polymerase] + ADP + H(+). With respect to regulation, phosphorylation at Thr-14 or Tyr-15 inactivates the enzyme, while phosphorylation at Thr-159 activates it. In terms of biological role, serine/threonine-protein kinase. Involved in the control of the cell cycle. Required for entry into S-phase and mitosis. Probable component of the kinase complex that phosphorylates the repetitive C-terminus of RNA polymerase II. The sequence is that of Cyclin-dependent kinase 2 homolog from Plasmodium yoelii yoelii.